The primary structure comprises 422 residues: uncharacterized protein (422 aa).

A disordered region spans residues Met-1–Ser-22. The span at Lys-7–Ser-22 shows a compositional bias: low complexity.

This is an uncharacterized protein from Acanthamoeba polyphaga mimivirus (APMV).